A 328-amino-acid chain; its full sequence is Alanine racemase (328 aa).

Catalysis depends on K33, which acts as the Proton acceptor; specific for D-alanine. N6-(pyridoxal phosphate)lysine is present on K33. Substrate is bound at residue R118. Y237 serves as the catalytic Proton acceptor; specific for L-alanine. Substrate is bound at residue M283.

It belongs to the alanine racemase family. Pyridoxal 5'-phosphate serves as cofactor.

The catalysed reaction is L-alanine = D-alanine. Its pathway is amino-acid biosynthesis; D-alanine biosynthesis; D-alanine from L-alanine: step 1/1. Its function is as follows. Catalyzes the interconversion of L-alanine and D-alanine. May also act on other amino acids. This Campylobacter jejuni subsp. jejuni serotype O:23/36 (strain 81-176) protein is Alanine racemase (alr).